The primary structure comprises 391 residues: 1-deoxy-D-xylulose 5-phosphate reductoisomerase (391 aa).

The NADPH site is built by threonine 17, glycine 18, serine 19, isoleucine 20, asparagine 47, and asparagine 130. Lysine 131 contributes to the 1-deoxy-D-xylulose 5-phosphate binding site. Glutamate 132 contributes to the NADPH binding site. Aspartate 156 is a binding site for Mn(2+). 1-deoxy-D-xylulose 5-phosphate-binding residues include serine 157, glutamate 158, serine 182, and histidine 205. Residue glutamate 158 participates in Mn(2+) binding. Residue glycine 211 participates in NADPH binding. 1-deoxy-D-xylulose 5-phosphate-binding residues include serine 218, asparagine 223, lysine 224, and glutamate 227. Glutamate 227 is a binding site for Mn(2+).

This sequence belongs to the DXR family. It depends on Mg(2+) as a cofactor. The cofactor is Mn(2+).

It carries out the reaction 2-C-methyl-D-erythritol 4-phosphate + NADP(+) = 1-deoxy-D-xylulose 5-phosphate + NADPH + H(+). The protein operates within isoprenoid biosynthesis; isopentenyl diphosphate biosynthesis via DXP pathway; isopentenyl diphosphate from 1-deoxy-D-xylulose 5-phosphate: step 1/6. Its function is as follows. Catalyzes the NADPH-dependent rearrangement and reduction of 1-deoxy-D-xylulose-5-phosphate (DXP) to 2-C-methyl-D-erythritol 4-phosphate (MEP). The chain is 1-deoxy-D-xylulose 5-phosphate reductoisomerase from Sinorhizobium fredii (strain NBRC 101917 / NGR234).